A 269-amino-acid chain; its full sequence is Thymidylate synthase (269 aa).

R21 contacts dUMP. H51 is a binding site for (6R)-5,10-methylene-5,6,7,8-tetrahydrofolate. 126-127 (RR) is a binding site for dUMP. C146 (nucleophile) is an active-site residue. DUMP-binding positions include 171–174 (RSGD), N182, and 212–214 (HLY). D174 lines the (6R)-5,10-methylene-5,6,7,8-tetrahydrofolate pocket. A268 serves as a coordination point for (6R)-5,10-methylene-5,6,7,8-tetrahydrofolate.

The protein belongs to the thymidylate synthase family. Bacterial-type ThyA subfamily. In terms of assembly, homodimer.

Its subcellular location is the cytoplasm. The catalysed reaction is dUMP + (6R)-5,10-methylene-5,6,7,8-tetrahydrofolate = 7,8-dihydrofolate + dTMP. Its pathway is pyrimidine metabolism; dTTP biosynthesis. In terms of biological role, catalyzes the reductive methylation of 2'-deoxyuridine-5'-monophosphate (dUMP) to 2'-deoxythymidine-5'-monophosphate (dTMP) while utilizing 5,10-methylenetetrahydrofolate (mTHF) as the methyl donor and reductant in the reaction, yielding dihydrofolate (DHF) as a by-product. This enzymatic reaction provides an intracellular de novo source of dTMP, an essential precursor for DNA biosynthesis. The chain is Thymidylate synthase from Methylocella silvestris (strain DSM 15510 / CIP 108128 / LMG 27833 / NCIMB 13906 / BL2).